An 822-amino-acid polypeptide reads, in one-letter code: MTSRFGQLTYTSFDAVGTVGGWQVKETSDALTPEETQLMLAGVRTVFRTVEPMPDYPTPEQLEAAPRRLAYSRVGETYAALWHTVPAGADSTGRPGNVFAHVLLDRTPDVAPRHRAIQWWRSPHWLCPYGATAVSRAALAEPGAEPGRVVTKDSVVAFALDTTTWRLATLFGLLDAVAAALDGGPPVVLGVESPDNAAQWIGLLSFLMSPGTAAQLSFSTFDRADQLNPHSGQMLSAVPLEDLSAVPAGMVAISEAETLSLGELGGEPHRTAGGYAIDVTPWSAMAQVVVLDPGSARRLLDDIDAVAEQVRDSGLHPAWPMAMAVAGRAEFADAEEEAHEVIAAHSPPGVAVGSAAARTISGVLSAAVGTTTADAWRAVQELPTGPGAVFADTTYLCRAVTDDEWLSENSPIPLGPRMFHGKPIPPPLRTAIGRALDPGRGPQRLLQVADLLVRAGVEDPRIRTTLVEDVVPRLGDAEVRERVGADARLTLGAVLLNDGDANGTAIDDGLLDWLADTAPLPPPDELAQATPWDRTWTIAALRGVRARRRGTGGAGQDAGALLWWLRATGSADFEQTATASAWNPEDLLLAIGADPLPGAAAVRTLVAAADSPALNRLAAKVIDENGDTLAVACAAVRTIEPTVWLQQRYVETHQHAYVPLWDEVLSVVDPADVHPDFSTRLLAFALLGLFTGHPYPRACSGFAASDRLGGEAIERLMPLVGEGQLAPHAVVAIGLLRAAAPPDPAHPDVTLDELAGHLAEQVATGMAGDDNDVDGVVAVMAQLSGDSAEPALRGYRKMVTKLLARRGDSPSLTARLRGGRQA.

May be involved in assembly of the ESX-1 / type VII specialized secretion system (T7SS), which exports several proteins including EsxA and EsxB. Involved in DNA conjugation in recipient (MDK8) but not donor (mc(2)155) strain. The chain is Putative ESX-1 scaffolding and assembly protein SaeB from Mycolicibacterium smegmatis (strain ATCC 700084 / mc(2)155) (Mycobacterium smegmatis).